The following is a 180-amino-acid chain: Large ribosomal subunit protein uL6 (180 aa).

This sequence belongs to the universal ribosomal protein uL6 family. As to quaternary structure, part of the 50S ribosomal subunit.

This protein binds to the 23S rRNA, and is important in its secondary structure. It is located near the subunit interface in the base of the L7/L12 stalk, and near the tRNA binding site of the peptidyltransferase center. In Prosthecochloris aestuarii (strain DSM 271 / SK 413), this protein is Large ribosomal subunit protein uL6.